The primary structure comprises 584 residues: Mitochondrial ribonuclease P catalytic subunit (584 aa).

The transit peptide at 1-43 (MTFYLSGFRSIPKLWKSNPYFELGPATSSTPFFLCAIGNQQRW) directs the protein to the mitochondrion. One can recognise a PRORP domain in the interval 339–575 (IQKSGQCSGC…SCEVPTKWLC (237 aa)). Zn(2+) contacts are provided by Cys-345 and Cys-348. Asp-406, Asp-475, Asp-476, and Asp-496 together coordinate Mg(2+). Zn(2+) contacts are provided by His-554 and Cys-575.

This sequence belongs to the PPR family. P subfamily. Catalytic component of mitochondrial ribonuclease P, a complex composed of TRMT10C/MRPP1, HSD17B10/MRPP2 and PRORP/MRPP3. Mg(2+) serves as cofactor. The cofactor is Mn(2+). Degraded by LONP1 following mitochondrial unfolded protein response, probably leading to inhibit translation in mitochondrion. As to expression, detected, after the onset of hearing, in the organ of Corti around the afferent and efferent synapses of the inner hair cells and the efferent synapses of the outer hair cells.

Its subcellular location is the mitochondrion. The catalysed reaction is Endonucleolytic cleavage of RNA, removing 5'-extranucleotides from tRNA precursor.. Catalytic ribonuclease component of mitochondrial ribonuclease P, a complex composed of TRMT10C/MRPP1, HSD17B10/MRPP2 and PRORP, which cleaves tRNA molecules in their 5'-ends. The presence of TRMT10C/MRPP1, HSD17B10/MRPP2 is required to catalyze tRNA molecules in their 5'-ends. The protein is Mitochondrial ribonuclease P catalytic subunit (Prorp) of Mus musculus (Mouse).